The chain runs to 153 residues: Cofilin (153 aa).

Positions 15 to 147 constitute an ADF-H domain; sequence GVAVNDSALQ…AYESVLERVS (133 aa).

It belongs to the actin-binding proteins ADF family.

The protein resides in the cytoplasm. It localises to the cytoskeleton. It is found in the nucleus matrix. Functionally, controls reversibly actin polymerization and depolymerization in a pH-sensitive manner. It has the ability to bind G- and F-actin in a 1:1 ratio of cofilin to actin. Binding to F-actin is regulated by tropomyosin. It is the major component of intranuclear and cytoplasmic actin rods. Required for accumulation of actin at the cell division site via depolymerizing actin at the cell ends. In association with myosin II has a role in the assembly of the contractile ring via severing actin filaments. Involved in the maintenance of the contractile ring once formed. In association with profilin and capping protein, has a role in the mitotic reorganization of the actin cytoskeleton. The chain is Cofilin (COF1) from Yarrowia lipolytica (strain CLIB 122 / E 150) (Yeast).